Reading from the N-terminus, the 89-residue chain is Exodeoxyribonuclease 7 small subunit (89 aa).

The segment at 1-23 is disordered; the sequence is MRPWRCVSMAKAPAAPSSTQPDP.

The protein belongs to the XseB family. In terms of assembly, heterooligomer composed of large and small subunits.

It is found in the cytoplasm. It carries out the reaction Exonucleolytic cleavage in either 5'- to 3'- or 3'- to 5'-direction to yield nucleoside 5'-phosphates.. Functionally, bidirectionally degrades single-stranded DNA into large acid-insoluble oligonucleotides, which are then degraded further into small acid-soluble oligonucleotides. This chain is Exodeoxyribonuclease 7 small subunit, found in Acidovorax sp. (strain JS42).